Reading from the N-terminus, the 314-residue chain is Glycine--tRNA ligase alpha subunit (314 aa).

Belongs to the class-II aminoacyl-tRNA synthetase family. As to quaternary structure, tetramer of two alpha and two beta subunits.

Its subcellular location is the cytoplasm. It carries out the reaction tRNA(Gly) + glycine + ATP = glycyl-tRNA(Gly) + AMP + diphosphate. This chain is Glycine--tRNA ligase alpha subunit, found in Leuconostoc citreum (strain KM20).